Here is a 130-residue protein sequence, read N- to C-terminus: MVLMDPLANALSVIKNAETTGKTDCVIDPASKIIGNVLKVMQDQGYVGEFEFVDNGKAGQLKVKLIGKINKCGVVKPRFAVGKTEMEKWEKRYLPARNFGTLILTTSKGVMSHYDAAKMGIGGEILAYVY.

The protein belongs to the universal ribosomal protein uS8 family. In terms of assembly, part of the 30S ribosomal subunit.

Its function is as follows. One of the primary rRNA binding proteins, it binds directly to 16S rRNA central domain where it helps coordinate assembly of the platform of the 30S subunit. The chain is Small ribosomal subunit protein uS8 from Methanocella arvoryzae (strain DSM 22066 / NBRC 105507 / MRE50).